A 404-amino-acid chain; its full sequence is Probable tRNA sulfurtransferase (404 aa).

In terms of domain architecture, THUMP spans 61–166 (EAVSERLKDV…SGYSYIMCDE (106 aa)). Residues 184-185 (LL), 209-210 (HF), arginine 266, glycine 288, and glutamine 297 contribute to the ATP site.

It belongs to the ThiI family.

The protein localises to the cytoplasm. The enzyme catalyses [ThiI sulfur-carrier protein]-S-sulfanyl-L-cysteine + a uridine in tRNA + 2 reduced [2Fe-2S]-[ferredoxin] + ATP + H(+) = [ThiI sulfur-carrier protein]-L-cysteine + a 4-thiouridine in tRNA + 2 oxidized [2Fe-2S]-[ferredoxin] + AMP + diphosphate. It catalyses the reaction [ThiS sulfur-carrier protein]-C-terminal Gly-Gly-AMP + S-sulfanyl-L-cysteinyl-[cysteine desulfurase] + AH2 = [ThiS sulfur-carrier protein]-C-terminal-Gly-aminoethanethioate + L-cysteinyl-[cysteine desulfurase] + A + AMP + 2 H(+). It functions in the pathway cofactor biosynthesis; thiamine diphosphate biosynthesis. Functionally, catalyzes the ATP-dependent transfer of a sulfur to tRNA to produce 4-thiouridine in position 8 of tRNAs, which functions as a near-UV photosensor. Also catalyzes the transfer of sulfur to the sulfur carrier protein ThiS, forming ThiS-thiocarboxylate. This is a step in the synthesis of thiazole, in the thiamine biosynthesis pathway. The sulfur is donated as persulfide by IscS. The sequence is that of Probable tRNA sulfurtransferase from Bacillus cereus (strain ATCC 14579 / DSM 31 / CCUG 7414 / JCM 2152 / NBRC 15305 / NCIMB 9373 / NCTC 2599 / NRRL B-3711).